Reading from the N-terminus, the 679-residue chain is DNA ligase (679 aa).

Residues 36 to 40 and 94 to 95 each bind NAD(+); these read DEYYD and SL. Catalysis depends on Lys126, which acts as the N6-AMP-lysine intermediate. Residues Arg147, Glu181, Lys299, and Lys323 each contribute to the NAD(+) site. Positions 415, 418, 433, and 438 each coordinate Zn(2+). Positions 603–679 constitute a BRCT domain; that stretch reads IQSTKLENKT…DEEFLKKMLE (77 aa).

Belongs to the NAD-dependent DNA ligase family. LigA subfamily. The cofactor is Mg(2+). It depends on Mn(2+) as a cofactor.

It carries out the reaction NAD(+) + (deoxyribonucleotide)n-3'-hydroxyl + 5'-phospho-(deoxyribonucleotide)m = (deoxyribonucleotide)n+m + AMP + beta-nicotinamide D-nucleotide.. In terms of biological role, DNA ligase that catalyzes the formation of phosphodiester linkages between 5'-phosphoryl and 3'-hydroxyl groups in double-stranded DNA using NAD as a coenzyme and as the energy source for the reaction. It is essential for DNA replication and repair of damaged DNA. The protein is DNA ligase of Mycoplasmopsis pulmonis (strain UAB CTIP) (Mycoplasma pulmonis).